Reading from the N-terminus, the 156-residue chain is SCP2 sterol-binding domain-containing protein 1 (156 aa).

An SCP2 domain is found at 44–156 (SFPVFQDIRL…ERVFKDWAKF (113 aa)).

The chain is SCP2 sterol-binding domain-containing protein 1 (SCP2D1) from Homo sapiens (Human).